A 146-amino-acid polypeptide reads, in one-letter code: Anti-sigma F factor (146 aa).

This sequence belongs to the anti-sigma-factor family.

It carries out the reaction L-seryl-[protein] + ATP = O-phospho-L-seryl-[protein] + ADP + H(+). It catalyses the reaction L-threonyl-[protein] + ATP = O-phospho-L-threonyl-[protein] + ADP + H(+). Binds to sigma F and blocks its ability to form an RNA polymerase holoenzyme (E-sigma F). Phosphorylates SpoIIAA on a serine residue. This phosphorylation may enable SpoIIAA to act as an anti-anti-sigma factor that counteracts SpoIIAB and thus releases sigma F from inhibition. In Bacillus subtilis (strain 168), this protein is Anti-sigma F factor (spoIIAB).